Consider the following 83-residue polypeptide: Colicin-E5 immunity protein (83 aa).

Functionally, this protein is able to protect a cell, which harbors the plasmid ColE5 encoding colicin E5, against colicin E5. This chain is Colicin-E5 immunity protein (imm), found in Escherichia coli.